Consider the following 308-residue polypeptide: MTEDKKVSVSMFIKELELEVVHKGENTDYEIISSDINRPALQFAGFFEHFAYDRVQVIGKGEHDYFGTLDRATRLRRLEKLFSYEIPVLVLARGLDFSSDTINMAKKYNRIIIRSQMSTTKFINKASGYLSEKLAPSKTVHGVLVDIYGIGVLLMGKSGVGKSETALELVKRGHRLVADDAVEIRRIEDDMLVGEAPDILKYLMEIRGVGILDIKNLYGVGAIRTNKVVEMVAELEYWEEGKYYDRLGIDEEYMTLLDVPVEKIVIPVKPGRNLAMIIEVAAKNYRQKNMGYNAAKIFNEKLLKKLSD.

Catalysis depends on residues H141 and K162. 156–163 serves as a coordination point for ATP; sequence GKSGVGKS. S163 is a binding site for Mg(2+). D180 acts as the Proton acceptor; for phosphorylation activity. Proton donor; for dephosphorylation activity in catalysis. The segment at 204–213 is important for the catalytic mechanism of both phosphorylation and dephosphorylation; the sequence is MEIRGVGILD. E205 is a binding site for Mg(2+). Residue R246 is part of the active site. The tract at residues 267–272 is important for the catalytic mechanism of dephosphorylation; sequence PVKPGR.

This sequence belongs to the HPrK/P family. In terms of assembly, homohexamer. Mg(2+) serves as cofactor.

It catalyses the reaction [HPr protein]-L-serine + ATP = [HPr protein]-O-phospho-L-serine + ADP + H(+). The catalysed reaction is [HPr protein]-O-phospho-L-serine + phosphate + H(+) = [HPr protein]-L-serine + diphosphate. Functionally, catalyzes the ATP- as well as the pyrophosphate-dependent phosphorylation of a specific serine residue in HPr, a phosphocarrier protein of the phosphoenolpyruvate-dependent sugar phosphotransferase system (PTS). HprK/P also catalyzes the pyrophosphate-producing, inorganic phosphate-dependent dephosphorylation (phosphorolysis) of seryl-phosphorylated HPr (P-Ser-HPr). The two antagonistic activities of HprK/P are regulated by several intracellular metabolites, which change their concentration in response to the absence or presence of rapidly metabolisable carbon sources (glucose, fructose, etc.) in the growth medium. Therefore, by controlling the phosphorylation state of HPr, HPrK/P is a sensor enzyme that plays a major role in the regulation of carbon metabolism and sugar transport: it mediates carbon catabolite repression (CCR), and regulates PTS-catalyzed carbohydrate uptake and inducer exclusion. In Peptoclostridium acidaminophilum (Eubacterium acidaminophilum), this protein is HPr kinase/phosphorylase.